A 501-amino-acid polypeptide reads, in one-letter code: Beta-secretase 1 (501 aa).

An N-terminal signal peptide occupies residues 1 to 21 (MAQALPWLLLWMGSGVLPAHG). A propeptide spanning residues 22 to 45 (SQPGIRLPLRSGLGGAPLGLRLPR) is cleaved from the precursor. Over 22-457 (SQPGIRLPLR…PQTDESTLMT (436 aa)) the chain is Extracellular. Residues 39–58 (LGLRLPRETDEESEEPGRRG) form a disordered region. In terms of domain architecture, Peptidase A1 spans 75 to 416 (YYVEMTLGSP…DRARKRIGFA (342 aa)). D93 is a catalytic residue. K126 carries the N6-acetyllysine modification. Residues N153, N172, and N223 are each glycosylated (N-linked (GlcNAc...) asparagine). Cystine bridges form between C216–C420, C278–C443, and C330–C380. N6-acetyllysine is present on residues K275, K279, and K285. The active site involves D289. N6-acetyllysine is present on residues K299, K300, and K307. N354 is a glycosylation site (N-linked (GlcNAc...) asparagine). The chain crosses the membrane as a helical span at residues 458–478 (IAYVMAAICALFMLPLCLMVC). Residues C474, C478, C482, and C485 are each lipidated (S-palmitoyl cysteine). Topologically, residues 479–501 (QWRCLRCLRHQHDDFADDISLLK) are cytoplasmic. An interaction with RTN3 region spans residues 479 to 501 (QWRCLRCLRHQHDDFADDISLLK). The DXXLL motif lies at 496 to 500 (DISLL). At S498 the chain carries Phosphoserine. A Glycyl lysine isopeptide (Lys-Gly) (interchain with G-Cter in ubiquitin) cross-link involves residue K501.

The protein belongs to the peptidase A1 family. In terms of assembly, monomer. Interacts (via DXXLL motif) with GGA1, GGA2 and GGA3 (via their VHS domain); the interaction highly increases when BACE1 is phosphorylated at Ser-498. Interacts with RTN1; RTN2; RTN3 and RTN4; the interaction leads to inhibition of amyloid precursor protein processing. Interacts with SNX6. Interacts with PCSK9. Interacts with NAT8 and NAT8B. Interacts with BIN1. Interacts (via extracellular domain) with ADAM10 (via extracellular domain). Interacts with SORL1; this interaction may affect binding with APP and hence reduce APP cleavage. Interacts with NRDC AND NRG1. Palmitoylation mediates lipid raft localization. Post-translationally, acetylated in the endoplasmic reticulum at Lys-126, Lys-275, Lys-279, Lys-285, Lys-299, Lys-300 and Lys-307. Acetylation by NAT8 and NAT8B is transient and deacetylation probably occurs in the Golgi. Acetylation regulates the maturation, the transport to the plasma membrane, the stability and the expression of the protein. In terms of processing, ubiquitinated at Lys-501, ubiquitination leads to lysosomal degradation. Monoubiquitinated and 'Lys-63'-linked polyubitinated. Deubiquitnated by USP8; inhibits lysosomal degradation. Phosphorylation at Ser-498 is required for interaction with GGA1 and retrograded transport from endosomal compartments to the trans-Golgi network. Non-phosphorylated BACE1 enters a direct recycling route to the cell surface. Post-translationally, N-Glycosylated. Addition of a bisecting N-acetylglucosamine by MGAT3 blocks lysosomal targeting, further degradation and is required for maintaining stability under stress conditions.

It localises to the cell membrane. Its subcellular location is the golgi apparatus. It is found in the trans-Golgi network. The protein localises to the endoplasmic reticulum. The protein resides in the endosome. It localises to the cell surface. Its subcellular location is the cytoplasmic vesicle membrane. It is found in the membrane raft. The protein localises to the lysosome. The protein resides in the late endosome. It localises to the early endosome. Its subcellular location is the recycling endosome. It is found in the cell projection. The protein localises to the axon. The protein resides in the dendrite. The enzyme catalyses Broad endopeptidase specificity. Cleaves Glu-Val-Asn-Leu-|-Asp-Ala-Glu-Phe in the Swedish variant of Alzheimer's amyloid precursor protein.. With respect to regulation, inhibited by RTN3 and RTN4. Functionally, responsible for the proteolytic processing of the amyloid precursor protein (APP). Cleaves at the N-terminus of the A-beta peptide sequence, between residues 671 and 672 of APP, leads to the generation and extracellular release of beta-cleaved soluble APP, and a corresponding cell-associated C-terminal fragment which is later released by gamma-secretase. Cleaves CHL1. This chain is Beta-secretase 1 (BACE1), found in Bos taurus (Bovine).